Here is a 263-residue protein sequence, read N- to C-terminus: 3-methyl-2-oxobutanoate hydroxymethyltransferase (263 aa).

Residues D45 and D84 each contribute to the Mg(2+) site. Residues 45 to 46 (DS), D84, and K112 each bind 3-methyl-2-oxobutanoate. E114 provides a ligand contact to Mg(2+). Residue E181 is the Proton acceptor of the active site.

This sequence belongs to the PanB family. In terms of assembly, homodecamer; pentamer of dimers. Requires Mg(2+) as cofactor.

It localises to the cytoplasm. It catalyses the reaction 3-methyl-2-oxobutanoate + (6R)-5,10-methylene-5,6,7,8-tetrahydrofolate + H2O = 2-dehydropantoate + (6S)-5,6,7,8-tetrahydrofolate. Its pathway is cofactor biosynthesis; (R)-pantothenate biosynthesis; (R)-pantoate from 3-methyl-2-oxobutanoate: step 1/2. Functionally, catalyzes the reversible reaction in which hydroxymethyl group from 5,10-methylenetetrahydrofolate is transferred onto alpha-ketoisovalerate to form ketopantoate. This chain is 3-methyl-2-oxobutanoate hydroxymethyltransferase, found in Proteus mirabilis (strain HI4320).